The chain runs to 320 residues: Mitochondrial thiamine pyrophosphate carrier (320 aa).

3 Solcar repeats span residues 13–106 (NTKF…LTEL), 116–202 (REFS…LKHL), and 214–309 (NENL…FCNV). Residues 19–39 (AVAGSVSGLVTRALISPFDVI) form a helical membrane-spanning segment. Residue Ser51 is modified to Phosphoserine. 4 helical membrane passes run 87 to 107 (ILSIGYGAVQFLSFEMLTELV), 122 to 142 (FVCGGLAACMATLTVHPVDVL), 173 to 193 (VFYKGLAPTLIAIFPYAGLQF), and 220 to 240 (LLCGSGAGVISKTLTYPLDLF). Positions 241 to 246 (KKRLQV) match the Substrate recognition motif. A helical membrane pass occupies residues 293–313 (ALSTGFMFFWYEFFCNVFHCM).

It belongs to the mitochondrial carrier (TC 2.A.29) family.

It is found in the mitochondrion membrane. It catalyses the reaction thiamine phosphate(out) + thiamine diphosphate(in) = thiamine phosphate(in) + thiamine diphosphate(out). In terms of biological role, mitochondrial transporter mediating uptake of thiamine diphosphate into mitochondria. It is not clear if the antiporter activity is affected by the membrane potential or by the proton electrochemical gradient. This is Mitochondrial thiamine pyrophosphate carrier (SLC25A19) from Pongo abelii (Sumatran orangutan).